We begin with the raw amino-acid sequence, 284 residues long: Nodulation protein O (284 aa).

The disordered stretch occupies residues 1 to 27; that stretch reads MNIKGSDNGSFIKGSPENDIIDGGKKN. Hemolysin-type calcium-binding repeat units lie at residues 13–30, 31–48, 58–75, 94–111, and 112–129; these read KGSP…NDWI, DAGN…QDSI, WAGK…DDLL, HSGE…SDIL, and VAGD…GDAF. The Ca(2+) site is built by aspartate 100, aspartate 109, aspartate 118, and aspartate 127. The segment at 208-222 is export signal (aspartic acid box); that stretch reads DRGFASAAAAATAID.

Its subcellular location is the secreted. Its function is as follows. The NodO protein may play a role in nodule development by direct interaction with the root hair cells or some other plant surface in a calcium-dependent manner. In Rhizobium leguminosarum bv. viciae, this protein is Nodulation protein O (nodO).